Reading from the N-terminus, the 594-residue chain is Amino-acid permease 1 (594 aa).

Transmembrane regions (helical) follow at residues glutamine 75 to leucine 95, glycine 101 to leucine 121, isoleucine 146 to isoleucine 166, leucine 181 to glycine 201, phenylalanine 210 to isoleucine 230, valine 297 to proline 317, leucine 323 to histidine 343, isoleucine 344 to alanine 364, proline 390 to proline 410, phenylalanine 416 to isoleucine 436, tyrosine 468 to valine 488, and phenylalanine 498 to phenylalanine 518. Residues threonine 550–glutamine 587 are disordered.

The protein belongs to the amino acid-polyamine-organocation (APC) superfamily.

It localises to the membrane. This Schizosaccharomyces pombe (strain 972 / ATCC 24843) (Fission yeast) protein is Amino-acid permease 1 (aap1).